The primary structure comprises 203 residues: ADP-ribosylation factor-like protein 6-interacting protein 1 (203 aa).

The Cytoplasmic segment spans residues 1-41; it reads MAEGDNRSSNLLAAETASLEEQLQGWGEVMLMADKVLRWER. A helical membrane pass occupies residues 42-62; that stretch reads AWFPPAIMGVVSLVFLIIYYL. The Lumenal segment spans residues 63-65; sequence DPS. Residues 66–86 form a helical membrane-spanning segment; that stretch reads VLSGVSCFVMFLCLADYLVPI. The Cytoplasmic segment spans residues 87–133; it reads LAPRIFGSNKWTTEQQQRFHEICSNLVKTRRRAVGWWKRLFTLKEEK. The helical transmembrane segment at 134 to 175 threads the bilayer; it reads PKMYFMTMIVSLAAVAWVGQQVHNLLLTYLIVTSLLLLPGLN. Residues 176-203 are Lumenal-facing; that stretch reads QHGIISKYIGMAKREINKLLKQKEKKNE.

The protein belongs to the ARL6ip family. In terms of assembly, homooligomer. Heterodimer with ARL6IP5. Interacts with ATL1, TMEM33 and ARL6.

The protein localises to the endomembrane system. It localises to the endoplasmic reticulum membrane. The protein resides in the endoplasmic reticulum. Functionally, positively regulates SLC1A1/EAAC1-mediated glutamate transport by increasing its affinity for glutamate in a PKC activity-dependent manner. Promotes the catalytic efficiency of SLC1A1/EAAC1 probably by reducing its interaction with ARL6IP5, a negative regulator of SLC1A1/EAAC1-mediated glutamate transport. Plays a role in the formation and stabilization of endoplasmic reticulum tubules. Negatively regulates apoptosis, possibly by modulating the activity of caspase-9 (CASP9). Inhibits cleavage of CASP9-dependent substrates and downstream markers of apoptosis but not CASP9 itself. May be involved in protein transport, membrane trafficking, or cell signaling during hematopoietic maturation. The polypeptide is ADP-ribosylation factor-like protein 6-interacting protein 1 (ARL6IP1) (Pongo abelii (Sumatran orangutan)).